The following is a 190-amino-acid chain: Lysozyme g (190 aa).

Positions 1-10 (MPYGKIEDIK) are enriched in basic and acidic residues. Residues 1–31 (MPYGKIEDIKTSGASDVTAAQDGLKEGGWKS) form a disordered region. Active-site residues include Glu-71 and Asp-84.

This sequence belongs to the glycosyl hydrolase 23 family.

The catalysed reaction is Hydrolysis of (1-&gt;4)-beta-linkages between N-acetylmuramic acid and N-acetyl-D-glucosamine residues in a peptidoglycan and between N-acetyl-D-glucosamine residues in chitodextrins.. The chain is Lysozyme g from Takifugu rubripes (Japanese pufferfish).